We begin with the raw amino-acid sequence, 372 residues long: Ligninase LG3 (372 aa).

The signal sequence occupies residues Met1–Ala21. The propeptide occupies Ala22 to Arg28. Intrachain disulfides connect Cys31–Cys43 and Cys62–Cys148. The active-site Proton acceptor is the His75. Ca(2+) contacts are provided by Asp76, Gly94, Asp96, and Ser98. His204 is a heme b binding site. Ca(2+) contacts are provided by Ser205, Asp222, Thr224, Ile227, and Asp229. Cys277 and Cys345 form a disulfide bridge. Residue Asn285 is glycosylated (N-linked (GlcNAc...) asparagine). Residues Phe350–Thr361 show a composition bias toward low complexity. The interval Phe350 to Ala372 is disordered.

It belongs to the peroxidase family. Ligninase subfamily. The cofactor is heme b. Ca(2+) serves as cofactor.

It carries out the reaction 1-(3,4-dimethoxyphenyl)-2-(2-methoxyphenoxy)propane-1,3-diol + H2O2 = 3,4-dimethoxybenzaldehyde + guaiacol + glycolaldehyde + H2O. It catalyses the reaction 2 (3,4-dimethoxyphenyl)methanol + H2O2 = 2 (3,4-dimethoxyphenyl)methanol radical + 2 H2O. The protein operates within secondary metabolite metabolism; lignin degradation. In terms of biological role, depolymerization of lignin. Catalyzes the C(alpha)-C(beta) cleavage of the propyl side chains of lignin. The sequence is that of Ligninase LG3 (GLG3) from Phanerodontia chrysosporium (White-rot fungus).